We begin with the raw amino-acid sequence, 164 residues long: Phosphopantetheine adenylyltransferase (164 aa).

Residue Ser9 coordinates substrate. Residues 9–10 and His17 each bind ATP; that span reads SF. Substrate is bound by residues Lys41, Val78, and Arg92. ATP contacts are provided by residues 93–95, Glu103, and 128–134; these read GLR and VRTITAT.

Belongs to the bacterial CoaD family. In terms of assembly, homohexamer. Requires Mg(2+) as cofactor.

Its subcellular location is the cytoplasm. The enzyme catalyses (R)-4'-phosphopantetheine + ATP + H(+) = 3'-dephospho-CoA + diphosphate. It functions in the pathway cofactor biosynthesis; coenzyme A biosynthesis; CoA from (R)-pantothenate: step 4/5. Functionally, reversibly transfers an adenylyl group from ATP to 4'-phosphopantetheine, yielding dephospho-CoA (dPCoA) and pyrophosphate. This is Phosphopantetheine adenylyltransferase from Brucella anthropi (strain ATCC 49188 / DSM 6882 / CCUG 24695 / JCM 21032 / LMG 3331 / NBRC 15819 / NCTC 12168 / Alc 37) (Ochrobactrum anthropi).